The primary structure comprises 195 residues: HTH-type transcriptional regulator BetI (195 aa).

The HTH tetR-type domain occupies 8–68 (EIRRAQLIDA…ATMRHVLRDL (61 aa)). The segment at residues 31 to 50 (TLASVAQRASISTGIVSHYF) is a DNA-binding region (H-T-H motif).

It participates in amine and polyamine biosynthesis; betaine biosynthesis via choline pathway [regulation]. In terms of biological role, repressor involved in the biosynthesis of the osmoprotectant glycine betaine. It represses transcription of the choline transporter BetT and the genes of BetAB involved in the synthesis of glycine betaine. The chain is HTH-type transcriptional regulator BetI from Paraburkholderia phytofirmans (strain DSM 17436 / LMG 22146 / PsJN) (Burkholderia phytofirmans).